The primary structure comprises 322 residues: Porphobilinogen deaminase (322 aa).

At cysteine 254 the chain carries S-(dipyrrolylmethanemethyl)cysteine.

This sequence belongs to the HMBS family. Monomer. Requires dipyrromethane as cofactor.

The catalysed reaction is 4 porphobilinogen + H2O = hydroxymethylbilane + 4 NH4(+). Its pathway is porphyrin-containing compound metabolism; protoporphyrin-IX biosynthesis; coproporphyrinogen-III from 5-aminolevulinate: step 2/4. Its function is as follows. Tetrapolymerization of the monopyrrole PBG into the hydroxymethylbilane pre-uroporphyrinogen in several discrete steps. The sequence is that of Porphobilinogen deaminase from Methylococcus capsulatus (strain ATCC 33009 / NCIMB 11132 / Bath).